A 766-amino-acid chain; its full sequence is Dipeptidyl peptidase 4 (766 aa).

At 1–6 (MKTPWK) the chain is on the cytoplasmic side. A helical; Signal-anchor for type II membrane protein membrane pass occupies residues 7–27 (VLLGLLGIAALVTVITVPVVL). At 28–766 (LNKGTDDAAA…HFLKQCFSLP (739 aa)) the chain is on the extracellular side. 8 N-linked (GlcNAc...) asparagine glycosylation sites follow: N85, N92, N150, N179, N219, N229, N279, and N321. 3 disulfides stabilise this stretch: C385–C394, C444–C447, and C454–C472. S630 serves as the catalytic Charge relay system. C649 and C762 form a disulfide bridge. N685 is a glycosylation site (N-linked (GlcNAc...) asparagine). Catalysis depends on charge relay system residues D708 and H740.

The protein belongs to the peptidase S9B family. DPPIV subfamily. Monomer. Homodimer. Heterodimer with Seprase (FAP). Requires homodimerization for optimal dipeptidyl peptidase activity and T-cell costimulation. Found in a membrane raft complex, at least composed of BCL10, CARD11, DPP4 and IKBKB. Associates with collagen. Interacts with PTPRC; the interaction is enhanced in an interleukin-12-dependent manner in activated lymphocytes. Interacts (via extracellular domain) with ADA; does not inhibit its dipeptidyl peptidase activity. Interacts with CAV1 (via the N-terminus); the interaction is direct. Interacts (via cytoplasmic tail) with CARD11 (via PDZ domain); its homodimerization is necessary for interaction with CARD11. Interacts with IGF2R; the interaction is direct. Interacts with GPC3. In terms of processing, the soluble form (Dipeptidyl peptidase 4 soluble form also named SDPP) derives from the membrane form (Dipeptidyl peptidase 4 membrane form also named MDPP) by proteolytic processing. Post-translationally, N- and O-Glycosylated. Phosphorylated. Mannose 6-phosphate residues in the carbohydrate moiety are necessary for interaction with IGF2R in activated T-cells. Mannose 6-phosphorylation is induced during T-cell activation.

Its subcellular location is the secreted. It is found in the cell membrane. The protein localises to the apical cell membrane. The protein resides in the cell projection. It localises to the invadopodium membrane. Its subcellular location is the lamellipodium membrane. It is found in the cell junction. The protein localises to the membrane raft. The catalysed reaction is Release of an N-terminal dipeptide, Xaa-Yaa-|-Zaa-, from a polypeptide, preferentially when Yaa is Pro, provided Zaa is neither Pro nor hydroxyproline.. Inhibited by GPC3 and diprotin A. Its function is as follows. Cell surface glycoprotein receptor involved in the costimulatory signal essential for T-cell receptor (TCR)-mediated T-cell activation. Acts as a positive regulator of T-cell coactivation, by binding at least ADA, CAV1, IGF2R, and PTPRC. Its binding to CAV1 and CARD11 induces T-cell proliferation and NF-kappa-B activation in a T-cell receptor/CD3-dependent manner. Its interaction with ADA also regulates lymphocyte-epithelial cell adhesion. In association with FAP is involved in the pericellular proteolysis of the extracellular matrix (ECM), the migration and invasion of endothelial cells into the ECM. May be involved in the promotion of lymphatic endothelial cells adhesion, migration and tube formation. When overexpressed, enhanced cell proliferation, a process inhibited by GPC3. Also acts as a serine exopeptidase with a dipeptidyl peptidase activity that regulates various physiological processes by cleaving peptides in the circulation, including many chemokines, mitogenic growth factors, neuropeptides and peptide hormones such as brain natriuretic peptide 32. Removes N-terminal dipeptides sequentially from polypeptides having unsubstituted N-termini provided that the penultimate residue is proline. The protein is Dipeptidyl peptidase 4 (DPP4) of Sus scrofa (Pig).